The chain runs to 542 residues: 2,3-bisphosphoglycerate-independent phosphoglycerate mutase (542 aa).

Mn(2+) contacts are provided by D13 and S63. Residue S63 is the Phosphoserine intermediate of the active site. Substrate-binding positions include H124, 154–155 (RD), R186, R192, 263–266 (RADR), and K357. Mn(2+) contacts are provided by D424, H428, D465, H466, and H484.

The protein belongs to the BPG-independent phosphoglycerate mutase family. As to quaternary structure, monomer. Mn(2+) is required as a cofactor.

The enzyme catalyses (2R)-2-phosphoglycerate = (2R)-3-phosphoglycerate. It functions in the pathway carbohydrate degradation; glycolysis; pyruvate from D-glyceraldehyde 3-phosphate: step 3/5. Its function is as follows. Catalyzes the interconversion of 2-phosphoglycerate and 3-phosphoglycerate. The sequence is that of 2,3-bisphosphoglycerate-independent phosphoglycerate mutase from Herpetosiphon aurantiacus (strain ATCC 23779 / DSM 785 / 114-95).